The sequence spans 49 residues: uncharacterized protein (49 aa).

A signal peptide spans 1–22 (MIQKPILLSSFLFLYIRALLHS).

This is an uncharacterized protein from Saccharomyces cerevisiae (strain ATCC 204508 / S288c) (Baker's yeast).